The following is a 192-amino-acid chain: uncharacterized protein (192 aa).

Residues 29-160 form the Nudix hydrolase domain; it reads QRQAAVLIPV…PLDVYRRGNS (132 aa). The Nudix box motif lies at 67 to 89; sequence GAVDSTDASLIAAALREAQEEVA. 2 residues coordinate Mg(2+): E83 and E87.

Belongs to the Nudix hydrolase family. PCD1 subfamily. Mn(2+) serves as cofactor. It depends on Mg(2+) as a cofactor.

In terms of biological role, probably mediates the hydrolysis of some nucleoside diphosphate derivatives. This is an uncharacterized protein from Salmonella dublin (strain CT_02021853).